The following is a 120-amino-acid chain: Large ribosomal subunit protein eL18 (120 aa).

The protein belongs to the eukaryotic ribosomal protein eL18 family.

In Thermococcus onnurineus (strain NA1), this protein is Large ribosomal subunit protein eL18.